The primary structure comprises 238 residues: Chromosome partition protein MukE (238 aa).

It belongs to the MukE family. Interacts, and probably forms a ternary complex, with MukF and MukB. The complex formation is stimulated by calcium or magnesium.

Its subcellular location is the cytoplasm. It localises to the nucleoid. Its function is as follows. Involved in chromosome condensation, segregation and cell cycle progression. May participate in facilitating chromosome segregation by condensation DNA from both sides of a centrally located replisome during cell division. Probably acts via its interaction with MukB and MukF. The polypeptide is Chromosome partition protein MukE (Haemophilus ducreyi (strain 35000HP / ATCC 700724)).